The chain runs to 476 residues: Serine/threonine-protein kinase Chk1 (476 aa).

Residues 1–265 (MAVPFVEDWD…IPDIKKDRWY (265 aa)) form an interaction with CLSPN region. Positions 9–265 (WDLVQTLGEG…IPDIKKDRWY (257 aa)) constitute a Protein kinase domain. Residues 15–23 (LGEGAYGEV) and Lys-38 each bind ATP. Asp-130 functions as the Proton acceptor in the catalytic mechanism. Lys-132 is covalently cross-linked (Glycyl lysine isopeptide (Lys-Gly) (interchain with G-Cter in ubiquitin)). A disordered region spans residues 267 to 331 (KPLNRGAKRP…RTGLSLWDTG (65 aa)). At Ser-280 the chain carries Phosphoserine; by PKB/AKT1. Over residues 280 to 291 (SGGMSESSSGFS) the composition is skewed to low complexity. Phosphoserine is present on residues Ser-286, Ser-296, and Ser-301. The span at 298 to 320 (LDFSPVNNGSSEETVKFSSSQPE) shows a compositional bias: polar residues. At Ser-317 the chain carries Phosphoserine; by ATM and ATR. Ser-345 is modified (phosphoserine; by ATR). The interval 391–476 (QCLKETFEKL…SSQKVWFPVT (86 aa)) is autoinhibitory region. Lys-436 participates in a covalent cross-link: Glycyl lysine isopeptide (Lys-Gly) (interchain with G-Cter in ubiquitin). A phosphoserine mark is found at Ser-463, Ser-467, and Ser-468.

This sequence belongs to the protein kinase superfamily. CAMK Ser/Thr protein kinase family. NIM1 subfamily. Interacts (phosphorylated by ATR) with RAD51. Interacts with and phosphorylates CLSPN, an adapter protein that regulates the ATR-dependent phosphorylation of CHEK1. Interacts with BRCA1. Interacts with and phosphorylates CDC25A, CDC25B and CDC25C. Interacts with FBXO6, which regulates CHEK1. Interacts with PPM1D, which regulates CHEK1 through dephosphorylation. Interacts with TIMELESS; DNA damage-dependent. Interacts with FEM1B; activates CHEK1 in response to stress. Interacts with TLK1. Interacts with XPO1 and YWHAZ. Interacts with CDK5RAP3; antagonizes CHEK1. In terms of processing, phosphorylated by ATR in a RAD17-dependent manner in response to ultraviolet irradiation and inhibition of DNA replication. Phosphorylated by ATM in response to ionizing irradiation. ATM and ATR can both phosphorylate Ser-317 and Ser-345 and this results in enhanced kinase activity. Phosphorylation at Ser-345 induces a change in the conformation of the protein, activates the kinase activity and is a prerequisite for interaction with FBXO6 and subsequent ubiquitination at Lys-436. Phosphorylation at Ser-345 also increases binding to 14-3-3 proteins and promotes nuclear retention. Conversely, dephosphorylation at Ser-345 by PPM1D may contribute to exit from checkpoint mediated cell cycle arrest. Phosphorylation at Ser-280 by AKT1/PKB, may promote mono and/or diubiquitination. Also phosphorylated at undefined residues during mitotic arrest, resulting in decreased activity. Post-translationally, ubiquitinated. Mono or diubiquitination promotes nuclear exclusion. The activated form (phosphorylated on Ser-345) is polyubiquitinated at Lys-436 by some SCF-type E3 ubiquitin ligase complex containing FBXO6 promoting its degradation. Ubiquitination and degradation are required to terminate the checkpoint and ensure that activated CHEK1 does not accumulate as cells progress through S phase, when replication forks encounter transient impediments during normal DNA replication. 'Lys-63'-mediated ubiquitination by TRAF4 at Lys-132 activates cell cycle arrest and activation of DNA repair. Proteolytically cleaved at the C-terminus by SPRTN during normal DNA replication, thereby promoting CHEK1 removal from chromatin and activating the protein kinase activity. In terms of tissue distribution, found in all adult tissues tested. Elevated expression in testis, lung and spleen. 15.5 day old embryos show ubiquitous expression with strong expression in brain, liver, kidney, pancreas, intestine, thymus and lung.

It is found in the nucleus. The protein resides in the chromosome. It localises to the cytoplasm. The protein localises to the cytoskeleton. Its subcellular location is the microtubule organizing center. It is found in the centrosome. The enzyme catalyses L-seryl-[protein] + ATP = O-phospho-L-seryl-[protein] + ADP + H(+). It catalyses the reaction L-threonyl-[protein] + ATP = O-phospho-L-threonyl-[protein] + ADP + H(+). Its activity is regulated as follows. Activated through phosphorylation predominantly by ATR but also by ATM in response to DNA damage or inhibition of DNA replication. Activation is modulated by several mediators including CLSPN, BRCA1 and FEM1B. Proteolytic cleavage at the C-terminus by SPRTN during normal DNA replication activates the protein kinase activity. In terms of biological role, serine/threonine-protein kinase which is required for checkpoint-mediated cell cycle arrest and activation of DNA repair in response to the presence of DNA damage or unreplicated DNA. May also negatively regulate cell cycle progression during unperturbed cell cycles. This regulation is achieved by a number of mechanisms that together help to preserve the integrity of the genome. Recognizes the substrate consensus sequence [R-X-X-S/T]. Binds to and phosphorylates CDC25A, CDC25B and CDC25C. Phosphorylation of CDC25A at 'Ser-178' and 'Thr-507' and phosphorylation of CDC25C at 'Ser-216' creates binding sites for 14-3-3 proteins which inhibit CDC25A and CDC25C. Phosphorylation of CDC25A at 'Ser-76', 'Ser-124', 'Ser-178', 'Ser-279' and 'Ser-293' promotes proteolysis of CDC25A. Phosphorylation of CDC25A at 'Ser-76' primes the protein for subsequent phosphorylation at 'Ser-79', 'Ser-82' and 'Ser-88' by NEK11, which is required for polyubiquitination and degradation of CDCD25A. Inhibition of CDC25 leads to increased inhibitory tyrosine phosphorylation of CDK-cyclin complexes and blocks cell cycle progression. Also phosphorylates NEK6. Binds to and phosphorylates RAD51 at 'Thr-309', which promotes the release of RAD51 from BRCA2 and enhances the association of RAD51 with chromatin, thereby promoting DNA repair by homologous recombination. Phosphorylates multiple sites within the C-terminus of TP53, which promotes activation of TP53 by acetylation and promotes cell cycle arrest and suppression of cellular proliferation. Also promotes repair of DNA cross-links through phosphorylation of FANCE. Binds to and phosphorylates TLK1 at 'Ser-743', which prevents the TLK1-dependent phosphorylation of the chromatin assembly factor ASF1A. This may enhance chromatin assembly both in the presence or absence of DNA damage. May also play a role in replication fork maintenance through regulation of PCNA. May regulate the transcription of genes that regulate cell-cycle progression through the phosphorylation of histones. Phosphorylates histone H3.1 (to form H3T11ph), which leads to epigenetic inhibition of a subset of genes. May also phosphorylate RB1 to promote its interaction with the E2F family of transcription factors and subsequent cell cycle arrest. Phosphorylates SPRTN, promoting SPRTN recruitment to chromatin. Reduces replication stress and activates the G2/M checkpoint, by phosphorylating and inactivating PABIR1/FAM122A and promoting the serine/threonine-protein phosphatase 2A-mediated dephosphorylation and stabilization of WEE1 levels and activity. The protein is Serine/threonine-protein kinase Chk1 (Chek1) of Mus musculus (Mouse).